The primary structure comprises 467 residues: Methionine aminopeptidase 2-1 (467 aa).

Basic and acidic residues predominate over residues 1-10; that stretch reads MGSKSPDGHR. Residues 1-105 form a disordered region; the sequence is MGSKSPDGHR…TPPRVSLPSI (105 aa). The span at 43-55 shows a compositional bias: acidic residues; it reads DGDDEDEDGDDDG. Basic residues predominate over residues 75 to 90; it reads KKRKRKSNKKKKKKTS. Substrate is bound at residue His-219. Positions 240, 251, and 320 each coordinate a divalent metal cation. Residue His-328 coordinates substrate. A divalent metal cation is bound by residues Glu-353 and Glu-448.

Belongs to the peptidase M24A family. Methionine aminopeptidase eukaryotic type 2 subfamily. The cofactor is Co(2+). Zn(2+) serves as cofactor. Mn(2+) is required as a cofactor. Requires Fe(2+) as cofactor.

The protein localises to the cytoplasm. It catalyses the reaction Release of N-terminal amino acids, preferentially methionine, from peptides and arylamides.. Cotranslationally removes the N-terminal methionine from nascent proteins. The N-terminal methionine is often cleaved when the second residue in the primary sequence is small and uncharged (Met-Ala-, Cys, Gly, Pro, Ser, Thr, or Val). The protein is Methionine aminopeptidase 2-1 of Arthroderma gypseum (strain ATCC MYA-4604 / CBS 118893) (Microsporum gypseum).